The following is a 354-amino-acid chain: UDP-N-acetylglucosamine--N-acetylmuramyl-(pentapeptide) pyrophosphoryl-undecaprenol N-acetylglucosamine transferase (354 aa).

Residues 11–13 (TAG), Arg-164, Ser-194, and Gln-289 contribute to the UDP-N-acetyl-alpha-D-glucosamine site.

Belongs to the glycosyltransferase 28 family. MurG subfamily.

It localises to the cell membrane. It carries out the reaction di-trans,octa-cis-undecaprenyl diphospho-N-acetyl-alpha-D-muramoyl-L-alanyl-D-glutamyl-meso-2,6-diaminopimeloyl-D-alanyl-D-alanine + UDP-N-acetyl-alpha-D-glucosamine = di-trans,octa-cis-undecaprenyl diphospho-[N-acetyl-alpha-D-glucosaminyl-(1-&gt;4)]-N-acetyl-alpha-D-muramoyl-L-alanyl-D-glutamyl-meso-2,6-diaminopimeloyl-D-alanyl-D-alanine + UDP + H(+). The protein operates within cell wall biogenesis; peptidoglycan biosynthesis. Its function is as follows. Cell wall formation. Catalyzes the transfer of a GlcNAc subunit on undecaprenyl-pyrophosphoryl-MurNAc-pentapeptide (lipid intermediate I) to form undecaprenyl-pyrophosphoryl-MurNAc-(pentapeptide)GlcNAc (lipid intermediate II). The polypeptide is UDP-N-acetylglucosamine--N-acetylmuramyl-(pentapeptide) pyrophosphoryl-undecaprenol N-acetylglucosamine transferase (Clostridium botulinum (strain 657 / Type Ba4)).